Reading from the N-terminus, the 427-residue chain is UDP-N-acetylglucosamine--N-acetylmuramyl-(pentapeptide) pyrophosphoryl-undecaprenol N-acetylglucosamine transferase (427 aa).

Residues 29 to 31, N141, R177, S205, I258, and Q303 contribute to the UDP-N-acetyl-alpha-D-glucosamine site; that span reads TGG. The interval 408–427 is disordered; that stretch reads SLHPIPDSRFPIRTSAGGAQ.

This sequence belongs to the glycosyltransferase 28 family. MurG subfamily.

It localises to the cell inner membrane. The catalysed reaction is di-trans,octa-cis-undecaprenyl diphospho-N-acetyl-alpha-D-muramoyl-L-alanyl-D-glutamyl-meso-2,6-diaminopimeloyl-D-alanyl-D-alanine + UDP-N-acetyl-alpha-D-glucosamine = di-trans,octa-cis-undecaprenyl diphospho-[N-acetyl-alpha-D-glucosaminyl-(1-&gt;4)]-N-acetyl-alpha-D-muramoyl-L-alanyl-D-glutamyl-meso-2,6-diaminopimeloyl-D-alanyl-D-alanine + UDP + H(+). It participates in cell wall biogenesis; peptidoglycan biosynthesis. Cell wall formation. Catalyzes the transfer of a GlcNAc subunit on undecaprenyl-pyrophosphoryl-MurNAc-pentapeptide (lipid intermediate I) to form undecaprenyl-pyrophosphoryl-MurNAc-(pentapeptide)GlcNAc (lipid intermediate II). The polypeptide is UDP-N-acetylglucosamine--N-acetylmuramyl-(pentapeptide) pyrophosphoryl-undecaprenol N-acetylglucosamine transferase (Xanthomonas campestris pv. campestris (strain 8004)).